A 225-amino-acid chain; its full sequence is MKWDWIFFDADETLFTFDSFTGLQRMFLDYSVTFTAEDFQDYQAVNKPLWVDYQNGAITSLQLQHGRFESWAERLNVEPGKLNEAFINAMAEICTPLPGAVSLLNAIRGNAKIGIITNGFSALQQVRLERTGLRDYFDLLVISEEVGVAKPNKKIFDYALEQAGNPDRSRVLMVGDTAESDILGGINAGLATCWLNAHHREQPEGIAPTWTVSSLHELEQLLCKH.

Residue D9 is the Nucleophile of the active site.

It belongs to the HAD-like hydrolase superfamily. YjjG family. Monomer, homodimer and possibly homotetramer in solution. It depends on Mn(2+) as a cofactor. The cofactor is Mg(2+). Co(2+) serves as cofactor.

Its subcellular location is the cytoplasm. The catalysed reaction is a ribonucleoside 5'-phosphate + H2O = a ribonucleoside + phosphate. It carries out the reaction a 2'-deoxyribonucleoside 5'-phosphate + H2O = a 2'-deoxyribonucleoside + phosphate. The enzyme catalyses UMP + H2O = uridine + phosphate. It catalyses the reaction dUMP + H2O = 2'-deoxyuridine + phosphate. The catalysed reaction is dTMP + H2O = thymidine + phosphate. Its activity is regulated as follows. In contrast to nucleotidases from other families, is not inhibited by ribo- and deoxyribonucleoside di- and triphosphates. In terms of biological role, nucleotidase that shows high phosphatase activity toward non-canonical pyrimidine nucleotides and three canonical nucleoside 5'-monophosphates (UMP, dUMP, and dTMP), and very low activity against TDP, IMP, UDP, GMP, dGMP, AMP, dAMP, and 6-phosphogluconate. Appears to function as a house-cleaning nucleotidase in vivo, since the general nucleotidase activity of YjjG allows it to protect cells against non-canonical pyrimidine derivatives such as 5-fluoro-2'-deoxyuridine, 5-fluorouridine, 5-fluoroorotate, 5-fluorouracil, and 5-aza-2'-deoxycytidine, and prevents the incorporation of potentially mutagenic nucleotides into DNA. Its dUMP phosphatase activity that catalyzes the hydrolysis of dUMP to deoxyuridine is necessary for thymine utilization via the thymine salvage pathway. Is strictly specific to substrates with 5'-phosphates and shows no activity against nucleoside 2'- or 3'-monophosphates. The polypeptide is Pyrimidine 5'-nucleotidase YjjG (yjjG) (Escherichia coli (strain K12)).